The chain runs to 279 residues: Ribosomal RNA small subunit methyltransferase A (279 aa).

Residues histidine 12, leucine 14, glycine 39, glutamate 60, aspartate 81, and asparagine 118 each contribute to the S-adenosyl-L-methionine site.

It belongs to the class I-like SAM-binding methyltransferase superfamily. rRNA adenine N(6)-methyltransferase family. RsmA subfamily.

Its subcellular location is the cytoplasm. It catalyses the reaction adenosine(1518)/adenosine(1519) in 16S rRNA + 4 S-adenosyl-L-methionine = N(6)-dimethyladenosine(1518)/N(6)-dimethyladenosine(1519) in 16S rRNA + 4 S-adenosyl-L-homocysteine + 4 H(+). Specifically dimethylates two adjacent adenosines (A1518 and A1519) in the loop of a conserved hairpin near the 3'-end of 16S rRNA in the 30S particle. May play a critical role in biogenesis of 30S subunits. This chain is Ribosomal RNA small subunit methyltransferase A, found in Polaromonas naphthalenivorans (strain CJ2).